We begin with the raw amino-acid sequence, 67 residues long: Prokaryotic ubiquitin-like protein Pup (67 aa).

The interval 1-26 is disordered; that stretch reads MATKETGGQKHATRRNQEVEEIEVTT. Residues 23–61 are ARC ATPase binding; sequence EVTTETSVRNEKLAEDVDDILDEIDEVLESNAEDFVRQF. The stretch at 27–55 forms a coiled coil; the sequence is ETSVRNEKLAEDVDDILDEIDEVLESNAE. An Isoglutamyl lysine isopeptide (Glu-Lys) (interchain with K-? in acceptor proteins) cross-link involves residue Glu-67.

Belongs to the prokaryotic ubiquitin-like protein family. In terms of assembly, strongly interacts with the proteasome-associated ATPase ARC through a hydrophobic interface; the interacting region of Pup lies in its C-terminal half. There is one Pup binding site per ARC hexamer ring.

Its pathway is protein degradation; proteasomal Pup-dependent pathway. Its function is as follows. Protein modifier that is covalently attached to lysine residues of substrate proteins, thereby targeting them for proteasomal degradation. The tagging system is termed pupylation. In Thermobifida fusca (strain YX), this protein is Prokaryotic ubiquitin-like protein Pup.